The chain runs to 65 residues: Ferredoxin-1 (65 aa).

In terms of domain architecture, 4Fe-4S ferredoxin-type spans 3–31 (RKFYVDQDECIACESCVEIAPGAFAMDPE). [4Fe-4S] cluster-binding residues include Cys-12, Cys-15, Cys-18, and Cys-55.

Homodimer. [4Fe-4S] cluster serves as cofactor.

Functionally, ferredoxins are iron-sulfur proteins that transfer electrons in a wide variety of metabolic reactions. The polypeptide is Ferredoxin-1 (fd1) (Desulfocurvibacter africanus (Desulfovibrio africanus)).